A 211-amino-acid polypeptide reads, in one-letter code: uncharacterized protein (211 aa).

Residues 1–27 form the signal peptide; the sequence is MKRTSAALVVFLILLFLGLLFLPMFIV.

This is an uncharacterized protein from Archaeoglobus fulgidus (strain ATCC 49558 / DSM 4304 / JCM 9628 / NBRC 100126 / VC-16).